Reading from the N-terminus, the 100-residue chain is Integration host factor subunit alpha (100 aa).

It belongs to the bacterial histone-like protein family. Heterodimer of an alpha and a beta chain.

Its function is as follows. This protein is one of the two subunits of integration host factor, a specific DNA-binding protein that functions in genetic recombination as well as in transcriptional and translational control. This is Integration host factor subunit alpha from Caulobacter vibrioides (strain ATCC 19089 / CIP 103742 / CB 15) (Caulobacter crescentus).